The chain runs to 255 residues: tRNA-cytidine(32) 2-sulfurtransferase (255 aa).

The short motif at 37 to 42 (SGGKDS) is the PP-loop motif element. [4Fe-4S] cluster-binding residues include Cys-112, Cys-115, and Cys-202.

It belongs to the TtcA family. In terms of assembly, homodimer. The cofactor is Mg(2+). It depends on [4Fe-4S] cluster as a cofactor.

The protein localises to the cytoplasm. The catalysed reaction is cytidine(32) in tRNA + S-sulfanyl-L-cysteinyl-[cysteine desulfurase] + AH2 + ATP = 2-thiocytidine(32) in tRNA + L-cysteinyl-[cysteine desulfurase] + A + AMP + diphosphate + H(+). It participates in tRNA modification. Its function is as follows. Catalyzes the ATP-dependent 2-thiolation of cytidine in position 32 of tRNA, to form 2-thiocytidine (s(2)C32). The sulfur atoms are provided by the cysteine/cysteine desulfurase (IscS) system. This is tRNA-cytidine(32) 2-sulfurtransferase from Citrifermentans bemidjiense (strain ATCC BAA-1014 / DSM 16622 / JCM 12645 / Bem) (Geobacter bemidjiensis).